The primary structure comprises 262 residues: Glycerol uptake facilitator protein (262 aa).

At 1–7 (MNFCSKK) the chain is on the cytoplasmic side. A helical membrane pass occupies residues 8 to 36 (KILKQCFFEFLGTGLIIFLGISSLVVSKL). The Extracellular portion of the chain corresponds to 37-41 (TNFHF). A helical transmembrane segment spans residues 42–62 (NHCEISCIWGLGVFISICFCS). Residues 63–65 (SVS) lie on the Cytoplasmic side of the membrane. Residues 66 to 69 (GAHL) lie within the membrane without spanning it. The short motif at 70-72 (NPA) is the NPA 1 element. An intramembrane region (helical) is located at residues 70-80 (NPAITIFLFLS). Over 81-86 (SQFNKK) the chain is Cytoplasmic. The helical transmembrane segment at 87 to 110 (KVIPYILSQISGTFFFTFLIYLIF) threads the bilayer. The Extracellular segment spans residues 111-145 (NNLLNSFESKYNIVRGTKKSLELASLFCVFPKENY). A helical transmembrane segment spans residues 146–171 (NFIHDFILEILIGIIFIIILMKLSEK). The Cytoplasmic portion of the chain corresponds to 172-180 (NNLFKFYKF). Residues 181 to 197 (INPFLIGTLVIIINLFL) traverse the membrane as a helical segment. Over 198–201 (TSYS) the chain is Extracellular. An intramembrane segment occupies 202-205 (NITL). Positions 206 to 208 (NPA) match the NPA 2 motif. The segment at residues 206 to 219 (NPARDLGPRIFLSL) is an intramembrane region (helical). The Extracellular segment spans residues 220 to 234 (IGWGKLAFTGDDNII). Residues 235-259 (FPYFLIPTIAPIIGINLGGWIYILY) form a helical membrane-spanning segment. Topologically, residues 260–262 (IKK) are cytoplasmic.

The protein belongs to the MIP/aquaporin (TC 1.A.8) family.

It localises to the cell membrane. The enzyme catalyses glycerol(in) = glycerol(out). Its function is as follows. Mediates glycerol diffusion across the cytoplasmic membrane via a pore-type mechanism. The polypeptide is Glycerol uptake facilitator protein (glpF) (Buchnera aphidicola subsp. Schizaphis graminum (strain Sg)).